The following is a 174-amino-acid chain: Variant surface antigen F (174 aa).

The signal sequence occupies residues 1 to 29 (MKKSIFSKKLLFSFGSLVALAAIPLITIS). C30 carries N-palmitoyl cysteine lipidation. The S-diacylglycerol cysteine moiety is linked to residue C30. The interval 32–174 (QTNTDQSQQP…PEQGNSQVSK (143 aa)) is disordered. Residues 43–53 (SGSGSGSGTSN) show a composition bias toward gly residues. 9 repeat units span residues 55-67 (SGST…GNNQ), 68-80 (GGST…GNNQ), 81-93 (GGST…GNNQ), 94-106 (GGST…GNNQ), 107-119 (GGST…GNNQ), 120-132 (GGST…GNNQ), 133-145 (GGST…GNNQ), 146-158 (GGST…GNNQ), and 159-171 (GGST…GNSQ). Positions 55–171 (SGSTPTPEQG…TPTPEQGNSQ (117 aa)) are 9 X 13 AA tandem repeats. A compositionally biased stretch (polar residues) spans 62–174 (EQGNNQGGST…PEQGNSQVSK (113 aa)).

The protein resides in the cell membrane. Responsible for the antigenic diversity for host adaptation. Expression in E.coli of a construct containing vlpD, vlpE, and vlpF yields antigenically distinguishable products corresponding to each gene. The polypeptide is Variant surface antigen F (vlpF) (Mesomycoplasma hyorhinis (Mycoplasma hyorhinis)).